The chain runs to 286 residues: uncharacterized protein (286 aa).

Residues 1 to 146 (MSRYKKDNDG…KPVDVERGDF (146 aa)) enclose the Integrase catalytic domain. Basic residues predominate over residues 252–263 (RKVKAKKGKKDK). Residues 252-286 (RKVKAKKGKKDKKLKESKKSDDTSTGASTGSSIAM) are disordered. A compositionally biased stretch (basic and acidic residues) spans 264 to 273 (KLKESKKSDD). The segment covering 274 to 286 (TSTGASTGSSIAM) has biased composition (low complexity).

This is an uncharacterized protein from Caenorhabditis elegans.